A 205-amino-acid chain; its full sequence is Inosine triphosphate pyrophosphatase (205 aa).

Residue 20–25 coordinates ITP; the sequence is TGNAKK. Glu-48 serves as a coordination point for Mg(2+). Residues Lys-60, 76–77, Lys-93, 152–155, Lys-175, and 180–181 contribute to the ITP site; these read DT, FGWD, and HR.

The protein belongs to the HAM1 NTPase family. In terms of assembly, homodimer. It depends on Mg(2+) as a cofactor. The cofactor is Mn(2+).

It localises to the cytoplasm. The enzyme catalyses ITP + H2O = IMP + diphosphate + H(+). It catalyses the reaction dITP + H2O = dIMP + diphosphate + H(+). It carries out the reaction XTP + H2O = XMP + diphosphate + H(+). Its function is as follows. Pyrophosphatase that hydrolyzes non-canonical purine nucleotides such as inosine triphosphate (ITP), deoxyinosine triphosphate (dITP) or xanthosine 5'-triphosphate (XTP) to their respective monophosphate derivatives. The enzyme does not distinguish between the deoxy- and ribose forms. Probably excludes non-canonical purines from RNA and DNA precursor pools, thus preventing their incorporation into RNA and DNA and avoiding chromosomal lesions. The protein is Inosine triphosphate pyrophosphatase of Oryza sativa subsp. japonica (Rice).